The sequence spans 721 residues: Rho GTPase-activating protein gacY (721 aa).

The segment at methionine 1 to threonine 325 is disordered. Residues asparagine 17–proline 33 show a composition bias toward low complexity. Positions alanine 34–glutamine 44 are enriched in pro residues. Over residues aspartate 146–asparagine 168 the composition is skewed to low complexity. Residues asparagine 169 to tyrosine 181 show a composition bias toward acidic residues. Polar residues-rich tracts occupy residues serine 182–asparagine 202 and lysine 219–arginine 240. Over residues glutamine 308 to glutamine 323 the composition is skewed to low complexity. The CRAL-TRIO domain occupies lysine 363–lysine 520. Residues alanine 528–phenylalanine 719 enclose the Rho-GAP domain.

The protein resides in the cytoplasm. Functionally, rho GTPase-activating protein involved in the signal transduction pathway. In Dictyostelium discoideum (Social amoeba), this protein is Rho GTPase-activating protein gacY (gacY).